Consider the following 1312-residue polypeptide: Multidrug resistance protein 3 (1312 aa).

The chain crosses the membrane as a helical span at residues 51-71 (GFIDYILLIGGIIGAMAAGVL). Positions 59–369 (IGGIIGAMAA…VAMPINALST (311 aa)) constitute an ABC transmembrane type-1 1 domain. The N-linked (GlcNAc...) asparagine glycan is linked to N98. The next 5 helical transmembrane spans lie at 127–147 (IYFAIGTTVGMFLMHFCFFVL), 197–217 (KFGVLFQTICGFIAGYAIGFS), 224–244 (LVIMAVTPFMLITVLFLGFFA), 302–322 (VVGVGLGMLLFFMMGSLALGS), and 344–364 (MVVFMSVLMATMSIAQVAMPI). An ABC transporter 1 domain is found at 404 to 643 (IKLEDVQFRY…KATYYGLVKR (240 aa)). Residue 439 to 446 (GASGCGKS) coordinates ATP. Residues 724–1033 (LLSFLGLIGG…LGQMIPDVGK (310 aa)) enclose the ABC transmembrane type-1 2 domain. The next 2 helical transmembrane spans lie at 725 to 745 (LSFLGLIGGIGAGAVFPFYMI) and 776 to 796 (IWILLFGLAVFVTTYMYLGLF). N-linked (GlcNAc...) asparagine glycosylation occurs at N819. 3 helical membrane-spanning segments follow: residues 852 to 872 (VGNVVNTLSSVGFGVGIAFYY), 874 to 894 (WKVALCVMAIAPVLIVIVFLN), and 958 to 978 (AFVSAANTFVTSCISAYSFYI). The ABC transporter 2 domain occupies 1068 to 1307 (IEFKDICFRY…KGFYYTLAMQ (240 aa)). 1103–1110 (GASGCGKS) serves as a coordination point for ATP.

Belongs to the ABC transporter superfamily. ABCB family. Multidrug resistance exporter (TC 3.A.1.201) subfamily.

The protein resides in the membrane. The enzyme catalyses ATP + H2O + xenobioticSide 1 = ADP + phosphate + xenobioticSide 2.. Energy-dependent efflux pump responsible for decreased drug accumulation in multidrug resistance parasites. This Entamoeba histolytica (strain ATCC 30459 / HM-1:IMSS / ABRM) protein is Multidrug resistance protein 3.